A 631-amino-acid polypeptide reads, in one-letter code: tRNA uridine 5-carboxymethylaminomethyl modification enzyme MnmG (631 aa).

15–20 (GAGHAG) is an FAD binding site. The tract at residues 214–233 (YSKTEEEPGDKEPRHFSFTS) is disordered. 276–290 (GPRYCPSIETKVVRF) contacts NAD(+).

It belongs to the MnmG family. As to quaternary structure, homodimer. Heterotetramer of two MnmE and two MnmG subunits. The cofactor is FAD.

The protein resides in the cytoplasm. In terms of biological role, NAD-binding protein involved in the addition of a carboxymethylaminomethyl (cmnm) group at the wobble position (U34) of certain tRNAs, forming tRNA-cmnm(5)s(2)U34. The polypeptide is tRNA uridine 5-carboxymethylaminomethyl modification enzyme MnmG (Lactobacillus delbrueckii subsp. bulgaricus (strain ATCC BAA-365 / Lb-18)).